The chain runs to 205 residues: ATP phosphoribosyltransferase (205 aa).

Belongs to the ATP phosphoribosyltransferase family. Short subfamily. Heteromultimer composed of HisG and HisZ subunits.

It localises to the cytoplasm. The catalysed reaction is 1-(5-phospho-beta-D-ribosyl)-ATP + diphosphate = 5-phospho-alpha-D-ribose 1-diphosphate + ATP. Its pathway is amino-acid biosynthesis; L-histidine biosynthesis; L-histidine from 5-phospho-alpha-D-ribose 1-diphosphate: step 1/9. Functionally, catalyzes the condensation of ATP and 5-phosphoribose 1-diphosphate to form N'-(5'-phosphoribosyl)-ATP (PR-ATP). Has a crucial role in the pathway because the rate of histidine biosynthesis seems to be controlled primarily by regulation of HisG enzymatic activity. This is ATP phosphoribosyltransferase from Staphylococcus saprophyticus subsp. saprophyticus (strain ATCC 15305 / DSM 20229 / NCIMB 8711 / NCTC 7292 / S-41).